Reading from the N-terminus, the 358-residue chain is Valine dehydrogenase (358 aa).

Lys88 is a catalytic residue. 188–194 lines the NAD(+) pocket; the sequence is GVGKVGH.

Belongs to the Glu/Leu/Phe/Val dehydrogenases family. Homodimer.

It localises to the cytoplasm. It catalyses the reaction L-valine + NAD(+) + H2O = 3-methyl-2-oxobutanoate + NH4(+) + NADH + H(+). It participates in amino-acid degradation; L-valine degradation. Functionally, oxidative deamination of branched-chain amino acids. The catabolism of valine is the major source of fatty acid precursors for macrolide biosynthesis and a vital source of antibiotic precursors. This chain is Valine dehydrogenase (vdh), found in Streptomyces virginiae (Streptomyces cinnamonensis).